A 246-amino-acid chain; its full sequence is Carboxylesterase (246 aa).

Catalysis depends on Ser93, which acts as the Nucleophile. Residues Asp192 and His222 each act as charge relay system in the active site.

Belongs to the lipase/esterase LIP3/BchO family. In terms of assembly, homodimer.

The catalysed reaction is a carboxylic ester + H2O = an alcohol + a carboxylate + H(+). Involved in the detoxification of xenobiotics. Shows maximal activity with C6 substrates, with gradually decreasing activity from C8 to C12 substrates. No activity for higher chain length substrates acids rather than long-chain ones. This is Carboxylesterase (est) from Geobacillus stearothermophilus (Bacillus stearothermophilus).